The chain runs to 149 residues: Probable flagellum biosynthesis repressor protein FlbT (149 aa).

This sequence belongs to the FlbT family.

Its function is as follows. Has a post-transcriptional repressor function in flagellum biogenesis. Associates with the 5'-UTR of fljK mRNA and promotes its degradation. The protein is Probable flagellum biosynthesis repressor protein FlbT of Rhizobium etli (strain CIAT 652).